The sequence spans 423 residues: Serine--tRNA ligase (423 aa).

231–233 (TAE) contacts L-serine. 262 to 264 (RSE) lines the ATP pocket. Glutamate 285 is a binding site for L-serine. ATP is bound at residue 349–352 (EISS). Serine 384 is a binding site for L-serine.

Belongs to the class-II aminoacyl-tRNA synthetase family. Type-1 seryl-tRNA synthetase subfamily. Homodimer. The tRNA molecule binds across the dimer.

It is found in the cytoplasm. It carries out the reaction tRNA(Ser) + L-serine + ATP = L-seryl-tRNA(Ser) + AMP + diphosphate + H(+). The enzyme catalyses tRNA(Sec) + L-serine + ATP = L-seryl-tRNA(Sec) + AMP + diphosphate + H(+). Its pathway is aminoacyl-tRNA biosynthesis; selenocysteinyl-tRNA(Sec) biosynthesis; L-seryl-tRNA(Sec) from L-serine and tRNA(Sec): step 1/1. Catalyzes the attachment of serine to tRNA(Ser). Is also able to aminoacylate tRNA(Sec) with serine, to form the misacylated tRNA L-seryl-tRNA(Sec), which will be further converted into selenocysteinyl-tRNA(Sec). The sequence is that of Serine--tRNA ligase from Lactococcus lactis subsp. lactis (strain IL1403) (Streptococcus lactis).